The following is a 304-amino-acid chain: Uricase (304 aa).

An N-acetylalanine modification is found at alanine 2. N6-acetyllysine; alternate is present on residues lysine 10 and lysine 23. 2 positions are modified to N6-succinyllysine; alternate: lysine 10 and lysine 23. The Charge relay system role is filled by lysine 23. 2 positions are modified to N6-acetyllysine: lysine 27 and lysine 36. Serine 39 and serine 63 each carry phosphoserine. The Charge relay system role is filled by threonine 68. Residues threonine 68 and aspartate 69 each contribute to the urate site. Lysine 118, lysine 122, and lysine 164 each carry N6-acetyllysine. Phenylalanine 170 serves as a coordination point for urate. N6-acetyllysine occurs at positions 175 and 185. Arginine 187 contributes to the urate binding site. An N6-acetyllysine; alternate mark is found at lysine 221 and lysine 228. N6-succinyllysine; alternate occurs at positions 221 and 228. Serine 232 carries the phosphoserine modification. Urate is bound by residues valine 235, glutamine 236, and asparagine 262. The active-site Charge relay system is histidine 264. The residue at position 278 (lysine 278) is an N6-acetyllysine. Tyrosine 289 carries the post-translational modification Phosphotyrosine. The short motif at 302–304 is the Microbody targeting signal element; it reads SRL.

The protein belongs to the uricase family. As to quaternary structure, homotetramer.

It is found in the peroxisome. It carries out the reaction urate + O2 + H2O = 5-hydroxyisourate + H2O2. It participates in purine metabolism; urate degradation; (S)-allantoin from urate: step 1/3. Its function is as follows. Catalyzes the oxidation of uric acid to 5-hydroxyisourate, which is further processed to form (S)-allantoin. The sequence is that of Uricase (UOX) from Sus scrofa (Pig).